The following is a 506-amino-acid chain: Nondiscriminating glutamyl-tRNA synthetase EARS2, mitochondrial (506 aa).

The N-terminal 41 residues, 1-41 (MAALLRRLLQRGRPLAASGRRVGRREARLGTGPGVAVRVRF), are a transit peptide targeting the mitochondrion. L-glutamate is bound at residue 40–42 (RFA). A 'HIGH' region motif is present at residues 45–53 (PTGFLHLGG). Residue histidine 50 participates in ATP binding. L-glutamate-binding positions include glutamate 76, 228-232 (YHLAC), and arginine 246. Glutamate 249 is a binding site for ATP. N6-succinyllysine is present on lysine 256. Position 284-288 (284-288 (KLSKR)) interacts with ATP. Positions 284–288 (KLSKR) match the 'KMSKS' region motif. An N6-acetyllysine modification is found at lysine 486.

This sequence belongs to the class-I aminoacyl-tRNA synthetase family. Glutamate--tRNA ligase type 1 subfamily.

The protein localises to the mitochondrion matrix. The catalysed reaction is tRNA(Glx) + L-glutamate + ATP = L-glutamyl-tRNA(Glx) + AMP + diphosphate. The enzyme catalyses tRNA(Glu) + L-glutamate + ATP = L-glutamyl-tRNA(Glu) + AMP + diphosphate. It catalyses the reaction tRNA(Gln) + L-glutamate + ATP = L-glutamyl-tRNA(Gln) + AMP + diphosphate. Non-discriminating glutamyl-tRNA synthetase that catalyzes aminoacylation of both mitochondrial tRNA(Glu) and tRNA(Gln) and participates in RNA aminoacylation for mitochondrial protein translation. Attachs glutamate to tRNA(Glu) or tRNA(Gln) in a two-step reaction: glutamate is first activated by ATP to form Glu-AMP and then transferred to the acceptor end of tRNA(Glu) or tRNA(Gln). In vitro, cytoplasmic tRNA(Gln) is slightly glutamylated, but with low activity. The protein is Nondiscriminating glutamyl-tRNA synthetase EARS2, mitochondrial of Macaca fascicularis (Crab-eating macaque).